The sequence spans 370 residues: Protein SUPPRESSOR OF NIM1 1 (370 aa).

In terms of domain architecture, F-box spans 1–43 (MALPWELEEDILSRLPPISLVRFRTVSKHWNSLFNDKTFINNH).

In terms of tissue distribution, ubiquitous, at low levels.

Its function is as follows. Negatively regulates a plant defense signaling pathway which is independent of salicylic acid (SA) and systemic acquired resistance (SAR). Confers sensitivity to P.syringae and P.parasitica. The polypeptide is Protein SUPPRESSOR OF NIM1 1 (SON1) (Arabidopsis thaliana (Mouse-ear cress)).